A 1105-amino-acid polypeptide reads, in one-letter code: Carbamoyl phosphate synthase large chain (1105 aa).

Residues 1–402 (MPKRDDIEKV…ALGKAVRSLE (402 aa)) are carboxyphosphate synthetic domain. Residues Arg-129, Arg-169, Gly-175, Gly-176, Lys-208, Val-210, Glu-215, Gly-241, Ile-242, His-243, Gln-285, and Glu-299 each coordinate ATP. The region spanning 133 to 328 (KTAMKNCGLE…IAKISALLAV (196 aa)) is the ATP-grasp 1 domain. Residues Gln-285, Glu-299, and Asn-301 each contribute to the Mg(2+) site. 3 residues coordinate Mn(2+): Gln-285, Glu-299, and Asn-301. The tract at residues 403–542 (LDIAPKLDLR…STYNGMENET (140 aa)) is oligomerization domain. Positions 543 to 945 (IPSKRRKIMV…AFAKAQLSAD (403 aa)) are carbamoyl phosphate synthetic domain. An ATP-grasp 2 domain is found at 667 to 858 (AKFLKQSGLS…VAKIAAKTII (192 aa)). ATP-binding residues include Arg-703, Lys-742, Leu-744, Glu-749, Gly-774, Ile-775, His-776, Ser-777, Gln-817, and Glu-829. The Mg(2+) site is built by Gln-817, Glu-829, and Asn-831. Residues Gln-817, Glu-829, and Asn-831 each contribute to the Mn(2+) site. Residues 940-1101 (AQLSADGIST…QDIFYAQQNT (162 aa)) enclose the MGS-like domain. The segment at 946–1105 (GISTKSLLVT…YAQQNTLLKK (160 aa)) is allosteric domain.

Belongs to the CarB family. Composed of two chains; the small (or glutamine) chain promotes the hydrolysis of glutamine to ammonia, which is used by the large (or ammonia) chain to synthesize carbamoyl phosphate. Tetramer of heterodimers (alpha,beta)4. It depends on Mg(2+) as a cofactor. Mn(2+) is required as a cofactor.

The catalysed reaction is hydrogencarbonate + L-glutamine + 2 ATP + H2O = carbamoyl phosphate + L-glutamate + 2 ADP + phosphate + 2 H(+). The enzyme catalyses hydrogencarbonate + NH4(+) + 2 ATP = carbamoyl phosphate + 2 ADP + phosphate + 2 H(+). It functions in the pathway amino-acid biosynthesis; L-arginine biosynthesis; carbamoyl phosphate from bicarbonate: step 1/1. The protein operates within pyrimidine metabolism; UMP biosynthesis via de novo pathway; (S)-dihydroorotate from bicarbonate: step 1/3. Its function is as follows. Large subunit of the glutamine-dependent carbamoyl phosphate synthetase (CPSase). CPSase catalyzes the formation of carbamoyl phosphate from the ammonia moiety of glutamine, carbonate, and phosphate donated by ATP, constituting the first step of 2 biosynthetic pathways, one leading to arginine and/or urea and the other to pyrimidine nucleotides. The large subunit (synthetase) binds the substrates ammonia (free or transferred from glutamine from the small subunit), hydrogencarbonate and ATP and carries out an ATP-coupled ligase reaction, activating hydrogencarbonate by forming carboxy phosphate which reacts with ammonia to form carbamoyl phosphate. This chain is Carbamoyl phosphate synthase large chain, found in Pseudothermotoga lettingae (strain ATCC BAA-301 / DSM 14385 / NBRC 107922 / TMO) (Thermotoga lettingae).